Consider the following 192-residue polypeptide: Thymidylate kinase (192 aa).

7-14 is a binding site for ATP; that stretch reads GVDGVGKS.

It belongs to the thymidylate kinase family.

It carries out the reaction dTMP + ATP = dTDP + ADP. Phosphorylation of dTMP to form dTDP in both de novo and salvage pathways of dTTP synthesis. The protein is Thymidylate kinase of Campylobacter fetus subsp. fetus (strain 82-40).